The chain runs to 67 residues: Ferredoxin (67 aa).

2 4Fe-4S ferredoxin-type domains span residues 3–31 (WKVS…MNDE) and 36–67 (PKVE…IEEA). The [4Fe-4S] cluster site is built by C12, D15, and C18. An intrachain disulfide couples C22 to C49. A [4Fe-4S] cluster-binding site is contributed by C57.

Requires [4Fe-4S] cluster as cofactor. [3Fe-4S] cluster serves as cofactor.

Ferredoxins are iron-sulfur proteins that transfer electrons in a wide variety of metabolic reactions. In Pyrococcus abyssi (strain GE5 / Orsay), this protein is Ferredoxin (fdxA).